A 739-amino-acid chain; its full sequence is MFQLELVNVVMHQRKAIEDTMRKKKKQQLHKFEMLPSPYDTAWVAMVPLPGSSSQLPCFPQCVEWILQNQQSNGSWDLNQLDSITKDALLSTLACVLALRRGLLFIGRNFSIAMDEQLAAPIGFNITFPGMLSSVIEMGLEVPIGQTDVERVLHLQETELKREYEENYRGRNTYMAYVSEGLGNAQDWNEVMNFQRKNGSLFNSLSITAAVLVHNYDAKAHRYLNLLLNKFGTAVYTKNIHRQLSMLDALENMGISRHFDGEIKSILDMTYSCWLQRDEEVMLDITTCAMAFRILRMNGYDVSSDDLCHIAEVSDFHSSHQGYLSDTRTLLELYKASEVSVADNEFILDRIGSWSGRLLKEQLSSGALQRTSSIFEEVEHALDCPFYATLDRLVHKRNIEHFAAMSYISYAQNNIPDELERIDSWVKENRLHELKFARQKSAYFYLSAAGTVFDPEMSDARIWWAINGVLTTVVDDFFDVGGSREELENLISLVEMWDEHHKEELYSEQVEIVFFAIFNSVNQLGAKVSAVQGRDVTKHLIEIWLDLLRSMMTEVEWRISNYVPTPEEYMENAAMTFALGPIVLPALYLVGPKIPESVVRDSEYNELFRLMSTCGRLLNDVQTYEREDGEGKVNSVSLLVIQSGGSVSIEEARREIMKPIERCRRELLGLVLRRGSAVPGPCKELFWKMCKVCYFFYSRGDGFSSPTAKSAAVDAVIRDPLDLAAVVASQEPIYIIPAS.

Mg(2+) contacts are provided by Asp475, Asp479, Asn619, Thr623, and Glu627. The DDXXD motif motif lies at 475–479 (DDFFD).

Belongs to the terpene synthase family. It depends on Mg(2+) as a cofactor. In terms of tissue distribution, expressed in roots and stems.

The chain is Ent-kaurene synthase-like 3 (KSL3) from Oryza sativa subsp. japonica (Rice).